A 375-amino-acid polypeptide reads, in one-letter code: Thiamine-phosphate synthase (375 aa).

Residues Met-1 to Gln-127 form a unknown region. The thiamine-phosphate synthase stretch occupies residues Cys-128–Asp-375. Residues Gln-183 to Arg-185 and Asn-215 each bind 4-amino-2-methyl-5-(diphosphooxymethyl)pyrimidine. Mg(2+) is bound by residues Asp-216 and Glu-235. The 4-amino-2-methyl-5-(diphosphooxymethyl)pyrimidine site is built by Ser-254 and Lys-283. 2-[(2R,5Z)-2-carboxy-4-methylthiazol-5(2H)-ylidene]ethyl phosphate is bound at residue Gly-315.

Belongs to the thiamine-phosphate synthase family. Mg(2+) serves as cofactor.

The enzyme catalyses 2-[(2R,5Z)-2-carboxy-4-methylthiazol-5(2H)-ylidene]ethyl phosphate + 4-amino-2-methyl-5-(diphosphooxymethyl)pyrimidine + 2 H(+) = thiamine phosphate + CO2 + diphosphate. It catalyses the reaction 2-(2-carboxy-4-methylthiazol-5-yl)ethyl phosphate + 4-amino-2-methyl-5-(diphosphooxymethyl)pyrimidine + 2 H(+) = thiamine phosphate + CO2 + diphosphate. The catalysed reaction is 4-methyl-5-(2-phosphooxyethyl)-thiazole + 4-amino-2-methyl-5-(diphosphooxymethyl)pyrimidine + H(+) = thiamine phosphate + diphosphate. It functions in the pathway cofactor biosynthesis; thiamine diphosphate biosynthesis; thiamine phosphate from 4-amino-2-methyl-5-diphosphomethylpyrimidine and 4-methyl-5-(2-phosphoethyl)-thiazole: step 1/1. Condenses 4-methyl-5-(beta-hydroxyethyl)thiazole monophosphate (THZ-P) and 2-methyl-4-amino-5-hydroxymethyl pyrimidine pyrophosphate (HMP-PP) to form thiamine monophosphate (TMP). This Rhodopirellula baltica (strain DSM 10527 / NCIMB 13988 / SH1) protein is Thiamine-phosphate synthase (thiE).